The chain runs to 952 residues: Probable RNA-binding protein 19 (952 aa).

In terms of domain architecture, RRM 1 spans 2–79 (SRLIVKNLPN…TRITVEFCKS (78 aa)). Disordered stretches follow at residues 85–126 (KPRA…LEKL), 159–267 (KAKT…RGAV), and 367–395 (KQAPTARGPPKSTTPWQGRTLGENEEEED). The span at 95 to 109 (KSSQPKQPSQDSVPS) shows a compositional bias: low complexity. The segment covering 163–180 (KASSDYLNFDSDSNSDSG) has biased composition (polar residues). A phosphoserine mark is found at serine 177, serine 179, and serine 183. Acidic residues-rich tracts occupy residues 181 to 196 (QESEEEPAREDPEEEQ) and 224 to 251 (SSEDEDEEDSEDEAVNCEEGSEEEEEEG). RRM domains lie at 293–368 (YTVK…REKQ) and 400–478 (GRLF…PSTI). Lysine 479 participates in a covalent cross-link: Glycyl lysine isopeptide (Lys-Gly) (interchain with G-Cter in SUMO2). Positions 481 to 504 (EASQEANAPGSSYKKKKEAMDKAN) are disordered. One can recognise an RRM 4 domain in the interval 584 to 656 (TVILAKNLPA…VPLYLEWAPI (73 aa)). Over residues 664–679 (QKKDSQHEQPAEKAEV) the composition is skewed to basic and acidic residues. A disordered region spans residues 664–719 (QKKDSQHEQPAEKAEVEQETVLDPEGEKASVEGAEASTGKMEEEEEEEEEEEEESI). A Phosphoserine modification is found at serine 693. The span at 705–718 (EEEEEEEEEEEEES) shows a compositional bias: acidic residues. RRM domains lie at 722–803 (CTLF…ISER) and 824–904 (SKIL…WADS). Phosphoserine occurs at positions 928 and 944.

It belongs to the RRM MRD1 family. In terms of tissue distribution, expressed in the crypts of Lieberkuhn of the intestine (at protein level).

It is found in the nucleus. It localises to the nucleolus. Its subcellular location is the nucleoplasm. The protein localises to the cytoplasm. The protein resides in the chromosome. In terms of biological role, plays a role in embryo pre-implantation development. This is Probable RNA-binding protein 19 (Rbm19) from Mus musculus (Mouse).